A 20-amino-acid polypeptide reads, in one-letter code: Trypsin inhibitor DE-3 (20 aa).

It belongs to the protease inhibitor I3 (leguminous Kunitz-type inhibitor) family.

Functionally, inhibition of trypsin. This is Trypsin inhibitor DE-3 from Erythrina corallodendron (Coral tree).